Reading from the N-terminus, the 74-residue chain is MAKKESYEEMLTKLQDILSNLETDDLNLEESMKSYEEGVKLVNKIYKILDSYEAKISIIKDDKELEFSEDYGDK.

Belongs to the XseB family. As to quaternary structure, heterooligomer composed of large and small subunits.

It localises to the cytoplasm. It carries out the reaction Exonucleolytic cleavage in either 5'- to 3'- or 3'- to 5'-direction to yield nucleoside 5'-phosphates.. Functionally, bidirectionally degrades single-stranded DNA into large acid-insoluble oligonucleotides, which are then degraded further into small acid-soluble oligonucleotides. This is Exodeoxyribonuclease 7 small subunit from Clostridium beijerinckii (strain ATCC 51743 / NCIMB 8052) (Clostridium acetobutylicum).